The chain runs to 146 residues: D-aminoacyl-tRNA deacylase (146 aa).

A Gly-cisPro motif, important for rejection of L-amino acids motif is present at residues G137 to P138.

It belongs to the DTD family. In terms of assembly, homodimer.

The protein localises to the cytoplasm. The catalysed reaction is glycyl-tRNA(Ala) + H2O = tRNA(Ala) + glycine + H(+). It carries out the reaction a D-aminoacyl-tRNA + H2O = a tRNA + a D-alpha-amino acid + H(+). Functionally, an aminoacyl-tRNA editing enzyme that deacylates mischarged D-aminoacyl-tRNAs. Also deacylates mischarged glycyl-tRNA(Ala), protecting cells against glycine mischarging by AlaRS. Acts via tRNA-based rather than protein-based catalysis; rejects L-amino acids rather than detecting D-amino acids in the active site. By recycling D-aminoacyl-tRNA to D-amino acids and free tRNA molecules, this enzyme counteracts the toxicity associated with the formation of D-aminoacyl-tRNA entities in vivo and helps enforce protein L-homochirality. The polypeptide is D-aminoacyl-tRNA deacylase (Shouchella clausii (strain KSM-K16) (Alkalihalobacillus clausii)).